Reading from the N-terminus, the 185-residue chain is Small ribosomal subunit protein uS5 (185 aa).

Positions 29–92 constitute an S5 DRBM domain; the sequence is LEEKVVKINR…EKAKKQLVRI (64 aa).

It belongs to the universal ribosomal protein uS5 family. Part of the 30S ribosomal subunit. Contacts proteins S4 and S8.

With S4 and S12 plays an important role in translational accuracy. Functionally, located at the back of the 30S subunit body where it stabilizes the conformation of the head with respect to the body. This chain is Small ribosomal subunit protein uS5, found in Aster yellows witches'-broom phytoplasma (strain AYWB).